We begin with the raw amino-acid sequence, 345 residues long: S-adenosylmethionine:tRNA ribosyltransferase-isomerase (345 aa).

The protein belongs to the QueA family. As to quaternary structure, monomer.

It localises to the cytoplasm. The enzyme catalyses 7-aminomethyl-7-carbaguanosine(34) in tRNA + S-adenosyl-L-methionine = epoxyqueuosine(34) in tRNA + adenine + L-methionine + 2 H(+). Its pathway is tRNA modification; tRNA-queuosine biosynthesis. Transfers and isomerizes the ribose moiety from AdoMet to the 7-aminomethyl group of 7-deazaguanine (preQ1-tRNA) to give epoxyqueuosine (oQ-tRNA). In Azoarcus sp. (strain BH72), this protein is S-adenosylmethionine:tRNA ribosyltransferase-isomerase.